The sequence spans 114 residues: Apokedarcidin (114 aa).

Intrachain disulfides connect C37-C47 and C88-C95.

It belongs to the neocarzinostatin family.

Functionally, binds non-covalently to an enediyne chromophore which is the cytotoxic and mutagenic component of the antibiotic. The chromophore cleaves duplex DNA site-specifically in a single-stranded manner. The apoprotein cleaves proteins selectively, in particular highly basic histones, with H1 proteins being cleaved the more readily. This Actinomycete sp. (strain L585-6 / ATCC 53650) protein is Apokedarcidin.